The following is a 488-amino-acid chain: uncharacterized protein (488 aa).

27-38 (IVHFGFGAFHRA) contacts NAD(+).

Belongs to the mannitol dehydrogenase family. UxuB subfamily.

This is an uncharacterized protein from Escherichia coli (strain K12).